Consider the following 311-residue polypeptide: Ribosomal RNA small subunit methyltransferase H (311 aa).

S-adenosyl-L-methionine is bound by residues 34-36 (GGH), D54, F80, D104, and Q111.

This sequence belongs to the methyltransferase superfamily. RsmH family.

It localises to the cytoplasm. The enzyme catalyses cytidine(1402) in 16S rRNA + S-adenosyl-L-methionine = N(4)-methylcytidine(1402) in 16S rRNA + S-adenosyl-L-homocysteine + H(+). Functionally, specifically methylates the N4 position of cytidine in position 1402 (C1402) of 16S rRNA. This chain is Ribosomal RNA small subunit methyltransferase H, found in Teredinibacter turnerae (strain ATCC 39867 / T7901).